A 220-amino-acid polypeptide reads, in one-letter code: Large ribosomal subunit protein uL1 (220 aa).

It belongs to the universal ribosomal protein uL1 family. Part of the 50S ribosomal subunit.

Binds directly to 23S rRNA. The L1 stalk is quite mobile in the ribosome, and is involved in E site tRNA release. Its function is as follows. Protein L1 is also a translational repressor protein, it controls the translation of the L11 operon by binding to its mRNA. The protein is Large ribosomal subunit protein uL1 of Ehrlichia chaffeensis (strain ATCC CRL-10679 / Arkansas).